The following is a 357-amino-acid chain: DNA replication and repair protein RecF (357 aa).

Residue 30 to 37 participates in ATP binding; that stretch reads GANGSGKT.

This sequence belongs to the RecF family.

It is found in the cytoplasm. Its function is as follows. The RecF protein is involved in DNA metabolism; it is required for DNA replication and normal SOS inducibility. RecF binds preferentially to single-stranded, linear DNA. It also seems to bind ATP. The chain is DNA replication and repair protein RecF from Salmonella agona (strain SL483).